A 61-amino-acid polypeptide reads, in one-letter code: MGNAGPLKLHTITKPGTIPYPPHGSQEFPSGTLSLSEVLTVPSALVTTLSFFLKCAIWPCS.

Residues 1–25 form a disordered region; the sequence is MGNAGPLKLHTITKPGTIPYPPHGS.

The sequence is that of Early E3 6.4 kDa protein from Homo sapiens (Human).